A 226-amino-acid polypeptide reads, in one-letter code: Small ribosomal subunit protein uS5 (226 aa).

The span at 1-18 (MAAPQRSRTTGAPSSGGP) shows a compositional bias: polar residues. The segment at 1–45 (MAAPQRSRTTGAPSSGGPSENERGRGGDRRGGDRRGGDRRGGDDR) is disordered. A compositionally biased stretch (basic and acidic residues) spans 20–45 (ENERGRGGDRRGGDRRGGDRRGGDDR). The region spanning 48–111 (FVERVVTINR…EEAKKNFFRV (64 aa)) is the S5 DRBM domain.

Belongs to the universal ribosomal protein uS5 family. Part of the 30S ribosomal subunit. Contacts proteins S4 and S8.

With S4 and S12 plays an important role in translational accuracy. Its function is as follows. Located at the back of the 30S subunit body where it stabilizes the conformation of the head with respect to the body. This chain is Small ribosomal subunit protein uS5, found in Beutenbergia cavernae (strain ATCC BAA-8 / DSM 12333 / CCUG 43141 / JCM 11478 / NBRC 16432 / NCIMB 13614 / HKI 0122).